Consider the following 816-residue polypeptide: Mechanosensitive cation channel TMEM63B (816 aa).

Over 1–46 (MLPYVIATLGSAGSTCKASTCSNSTKDYCYSARIRSTVLQGLPFGG) the chain is Extracellular. Residues 47 to 71 (VPTVLALDFMCFLALLFVFSILRKV) form a helical membrane-spanning segment. 2 S-palmitoyl cysteine lipidation sites follow: cysteine 57 and cysteine 119. The Cytoplasmic segment spans residues 72–138 (AWDYGRLALV…KDDEIRDKCG (67 aa)). A helical transmembrane segment spans residues 139-171 (GDAVHYLSFQRHIIGLLVAVGVLSVGIVLPVNF). The Extracellular portion of the chain corresponds to 172-195 (SGDLLENNAYSFGRTTIANLNSGN). A helical transmembrane segment spans residues 196–220 (NLLWLHTSFAFLYLLLTVYSMRRHT). Residues 221 to 420 (SKMRYKEDDL…IYWEHLSIRG (200 aa)) are Cytoplasmic-facing. The interval 224 to 419 (RYKEDDLVKR…NIYWEHLSIR (196 aa)) is intracellular linker IL2; confers mechanosensitivity. S-palmitoyl cysteine attachment occurs at residues cysteine 375 and cysteine 391. A helical transmembrane segment spans residues 421 to 450 (FIWWIRCLVINVVLFILLFFLTTPAIIITT). Residues 451–465 (MDKFNVTKPVEYLNN) lie on the Extracellular side of the membrane. The chain crosses the membrane as a helical span at residues 466–495 (PIITQFFPTLLLWCFSALLPTIVYYSAFFE). At 496–499 (AHWT) the chain is on the cytoplasmic side. A helical transmembrane segment spans residues 500 to 536 (RSGENRTTMHKCYTFLIFMVLLLPSLGLSSLDVFFRW). The Extracellular segment spans residues 537 to 559 (LFDKKFLAEAAVRFECVFLPDNG). The helical transmembrane segment at 560–592 (AFFVNYVIASAFIGNAMDLLRIPGLLMYMIRLC) threads the bilayer. The tract at residues 560-592 (AFFVNYVIASAFIGNAMDLLRIPGLLMYMIRLC) is gating helix. Residues 593-612 (LARSAAERRNVKRHQAYEFQ) lie on the Cytoplasmic side of the membrane. A helical membrane pass occupies residues 613 to 631 (FGAAYAWMMCVFTVVMTYS). Topologically, residues 632–634 (ITC) are extracellular. Residues 635–659 (PIIVPFGLMYMLLKHLVDRYNLYYA) form a helical membrane-spanning segment. Topologically, residues 660-666 (YLPAKLD) are cytoplasmic. Residues 667–695 (KKIHSGAVNQVVAAPILCLFWLLFFSTMR) traverse the membrane as a helical segment. The Extracellular portion of the chain corresponds to 696–700 (TGFLA). Residues 701 to 721 (PTSMFTFVVLVITIVICLCHV) traverse the membrane as a helical segment. S-palmitoyl cysteine attachment occurs at residues cysteine 719 and cysteine 722. The Cytoplasmic portion of the chain corresponds to 722–816 (CFGHFKYLSA…DSLIENEIRQ (95 aa)).

It belongs to the CSC1 (TC 1.A.17) family. Monomer. In terms of processing, palmitoylation is required for localization to the plasma membrane and stability.

It localises to the cell membrane. It is found in the lysosome membrane. The protein resides in the early endosome membrane. The catalysed reaction is Ca(2+)(in) = Ca(2+)(out). It carries out the reaction Mg(2+)(in) = Mg(2+)(out). The enzyme catalyses K(+)(in) = K(+)(out). It catalyses the reaction Na(+)(in) = Na(+)(out). The catalysed reaction is Cs(+)(in) = Cs(+)(out). In terms of biological role, mechanosensitive cation channel with low conductance and high activation threshold. Osmosensitive cation channel preferentially activated by hypotonic stress. Also acts as a phospholipid scramblase in response to changes in membrane structure: upon changes in membrane curvature and thickness, alters its conformation and translocates phospholipids, thereby controlling plasma membrane lipid distribution. The chain is Mechanosensitive cation channel TMEM63B from Gallus gallus (Chicken).